Consider the following 199-residue polypeptide: Putative 3-methyladenine DNA glycosylase (199 aa).

It belongs to the DNA glycosylase MPG family.

The protein is Putative 3-methyladenine DNA glycosylase of Rhizobium etli (strain ATCC 51251 / DSM 11541 / JCM 21823 / NBRC 15573 / CFN 42).